Reading from the N-terminus, the 3412-residue chain is Genome polyprotein (3412 aa).

Over 1-104 the chain is Cytoplasmic; it reads MSGRKAQGKT…LSSRKRRSNE (104 aa). The interval 38–72 is hydrophobic; homodimerization of capsid protein C; it reads PGPSRGVQGFIFFFLFNILTGKKLTAHLKKLWRML. Positions 102–121 are cleaved as a propeptide — ER anchor for the capsid protein C, removed in mature form by serine protease NS3; that stretch reads SNEMALFPLLLLGLLALSGG. A helical transmembrane segment spans residues 105–125; sequence MALFPLLLLGLLALSGGVTLV. Residues 126-244 are Extracellular-facing; it reads RKNRWLLLNV…GERQLQKIER (119 aa). Residues Asn134 and Asn150 are each glycosylated (N-linked (GlcNAc...) asparagine; by host). Residues 245–265 traverse the membrane as a helical segment; sequence WLVRNPFFAVTALAIAYLVGN. At 266–270 the chain is on the cytoplasmic side; it reads NTTQR. The chain crosses the membrane as a helical span at residues 271-285; it reads VVIALLVLAVGPAYS. At 286–730 the chain is on the extracellular side; that stretch reads AHCIGITDRD…TVFGSAFQGL (445 aa). 8 disulfides stabilise this stretch: Cys288/Cys315, Cys345/Cys401, Cys345/Cys406, Cys359/Cys390, Cys377/Cys401, Cys377/Cys406, Cys467/Cys568, and Cys585/Cys615. Residues 383 to 396 are fusion peptide; that stretch reads DRGWGNGCGLFGKG. The helical transmembrane segment at 731–751 threads the bilayer; sequence FGGLSWITKVIMGAVLIWVGI. The Extracellular portion of the chain corresponds to 752 to 757; sequence NTRNMT. Residues 758–778 traverse the membrane as a helical segment; the sequence is MSMSMILVGVIMMFLSLGVGA. Residues 779 to 1132 are Extracellular-facing; sequence DQGCAVNFGK…LVRSWVTAGE (354 aa). 6 disulfide bridges follow: Cys782/Cys793, Cys833/Cys921, Cys957/Cys1002, Cys1058/Cys1107, Cys1069/Cys1091, and Cys1090/Cys1094. Asn908 and Asn986 each carry an N-linked (GlcNAc...) asparagine; by host glycan. The helical transmembrane segment at 1133 to 1153 threads the bilayer; the sequence is VHAVPFGLVSMMIAMEVVLRR. At 1154–1201 the chain is on the cytoplasmic side; sequence RQGPKQMLVGGVVLLGAMLVGQVTVLDLVKFVVAVGLHFHEINNGGDA. Residues 1202-1222 traverse the membrane as a helical segment; that stretch reads MYMALIASFSIRPGLLMGFGL. The Lumenal segment spans residues 1223-1287; that stretch reads RTLWSPRERL…ILPLMALMTP (65 aa). The chain crosses the membrane as a helical span at residues 1288-1308; sequence MTMHEVRMATMLFCTVVIIGV. At 1309-1355 the chain is on the cytoplasmic side; the sequence is LHQNSKDTSMQKTIPIVALTLTSYMGLTQPFLGLCAYMSTQVFGRRS. A helical transmembrane segment spans residues 1356–1376; it reads IPVNEALAAAGLVGVLAGLAF. The Lumenal portion of the chain corresponds to 1377 to 1378; the sequence is QD. A helical transmembrane segment spans residues 1379 to 1399; sequence MENFLGPIAVGGILMMLVSVA. At 1400-1456 the chain is on the cytoplasmic side; the sequence is GRVDGLELKKLGEISWEEEAEISGSSSRYDVALSEQGEFKLLSEDKVPWDQIVMTSL. The interacts with and activates NS3 protease stretch occupies residues 1407–1446; it reads LKKLGEISWEEEAEISGSSSRYDVALSEQGEFKLLSEDKV. Positions 1457–1477 form an intramembrane region, helical; the sequence is ALVGAAIHPFALLLVLGGWIL. Over 1478 to 2157 the chain is Cytoplasmic; the sequence is HIKGARRSGD…RNALSMMPEA (680 aa). Positions 1485-1665 constitute a Peptidase S7 domain; the sequence is SGDVLWDIPT…ELKEESKEEL (181 aa). Residues His1537, Asp1561, and Ser1622 each act as charge relay system; for serine protease NS3 activity in the active site. A Helicase ATP-binding domain is found at 1669–1825; it reads PTMLKKGMTT…HSNGEIEDVQ (157 aa). The segment at 1673-1676 is important for RNA-binding; sequence KKGM. An ATP-binding site is contributed by 1682–1689; it reads FHPGAGKT. The DEAH box motif lies at 1773–1776; sequence DEAH. The Helicase C-terminal domain occupies 1836 to 1997; sequence GHEWILADKR…VRGGMVAPLY (162 aa). Position 1877 is an N6-acetyllysine; by host (Lys1877). A disordered region spans residues 1942-1963; it reads AAQRRGRIGRNPNRDGDSYYYS. A helical membrane pass occupies residues 2158–2178; the sequence is MTIVMLFLLAGLLTSGAVIFF. Residues 2179–2186 lie on the Lumenal side of the membrane; sequence MSPKGMSR. Residues 2187-2207 constitute an intramembrane region (helical); it reads MSMAMGTMAGSGYLMFLGGVK. The Lumenal portion of the chain corresponds to 2208-2209; it reads PT. The helical transmembrane segment at 2210–2230 threads the bilayer; it reads HISYVMLIFFVLMVVVIPEPG. Residues 2231–2241 lie on the Cytoplasmic side of the membrane; sequence QQRTIQDNQVA. The chain crosses the membrane as a helical span at residues 2242 to 2262; sequence YLIIGILTLLSVVAANELGML. Residues 2263–2293 are Lumenal-facing; that stretch reads EKTKEDFFGKRDITTPSGAIPWSWPDLDLKP. An intramembrane region (helical) is located at residues 2294-2314; the sequence is GAAWTVYVGIVTMLSPMLHHW. Topologically, residues 2315-2360 are lumenal; it reads IKVEYGNLSLSGIAQSASVLSFMDKGIPFMKMNISVVILLVSGWNS. Residues 2361–2380 form a helical membrane-spanning segment; it reads ITVIPLLCGIGGAMLHWTLI. The Cytoplasmic segment spans residues 2381-2421; that stretch reads LPGIKAQQSKLAQKRVFHGVAKNPVVDGNPTADIEEAPEMP. A helical transmembrane segment spans residues 2422–2442; that stretch reads ALYEKKLALYLLLALSLMSVA. The Lumenal portion of the chain corresponds to 2443-2445; sequence MCR. Residues 2446–2466 form a helical membrane-spanning segment; sequence TPFSLAEGIVLSSAALGPLIE. The Cytoplasmic portion of the chain corresponds to 2467–3411; it reads GNTSLLWNGP…VDADLQPGEL (945 aa). The mRNA cap 0-1 NS5-type MT domain occupies 2508–2772; sequence GSASGKTLGE…DVILPIGTRS (265 aa). Ser2563 provides a ligand contact to S-adenosyl-L-methionine. A Phosphoserine modification is found at Ser2563. Residue Lys2568 is the For 2'-O-MTase activity of the active site. Gly2593, Trp2594, Thr2611, Leu2612, Asp2638, and Val2639 together coordinate S-adenosyl-L-methionine. Asp2653 serves as the catalytic For 2'-O-MTase activity. Ile2654 serves as a coordination point for S-adenosyl-L-methionine. Catalysis depends on for 2'-O-MTase activity residues Lys2689 and Glu2725. S-adenosyl-L-methionine is bound at residue Tyr2727. Positions 2879-2912 match the Nuclear localization signal motif; the sequence is RKIMKVVNRWLFRHLSREKNPRLCTKEEFIAKVR. The Zn(2+) site is built by Glu2946, His2950, Cys2955, and Cys2958. The RdRp catalytic domain maps to 3036-3188; sequence GGFYADDTAG…RPVDDRFGLA (153 aa). Zn(2+) is bound by residues His3223, Cys3239, and Cys3358.

In the N-terminal section; belongs to the class I-like SAM-binding methyltransferase superfamily. mRNA cap 0-1 NS5-type methyltransferase family. Homodimer. Interacts (via N-terminus) with host EXOC1 (via C-terminus); this interaction results in EXOC1 degradation through the proteasome degradation pathway. In terms of assembly, forms heterodimers with envelope protein E in the endoplasmic reticulum and Golgi. As to quaternary structure, homodimer; in the endoplasmic reticulum and Golgi. Interacts with protein prM. Interacts with non-structural protein 1. Homodimer; Homohexamer when secreted. Interacts with envelope protein E. In terms of assembly, interacts (via N-terminus) with serine protease NS3. As to quaternary structure, forms a heterodimer with serine protease NS3. May form homooligomers. Forms a heterodimer with NS2B. Interacts with non-structural protein 2A (via N-terminus). Interacts with NS4B. Interacts with unphosphorylated RNA-directed RNA polymerase NS5; this interaction stimulates RNA-directed RNA polymerase NS5 guanylyltransferase activity. NS3 interacts with host PDCD6IP; this interaction contributes to virion release. In terms of assembly, interacts with serine protease NS3. As to quaternary structure, homodimer. Interacts with host STAT2; this interaction prevents the establishment of cellular antiviral state. Interacts with serine protease NS3. Interacts with host TRIM23; this interaction leads to NS5 ubiquitination. Post-translationally, specific enzymatic cleavages in vivo yield mature proteins. The nascent capsid protein C contains a C-terminal hydrophobic domain that act as a signal sequence for translocation of prM into the lumen of the ER. Mature capsid protein C is cleaved at a site upstream of this hydrophobic domain by NS3. prM is cleaved in post-Golgi vesicles by a host furin, releasing the mature small envelope protein M, and peptide pr. Non-structural protein 2A-alpha, a C-terminally truncated form of non-structural protein 2A, results from partial cleavage by NS3. Specific enzymatic cleavages in vivo yield mature proteins peptide 2K acts as a signal sequence and is removed from the N-terminus of NS4B by the host signal peptidase in the ER lumen. Signal cleavage at the 2K-4B site requires a prior NS3 protease-mediated cleavage at the 4A-2K site. In terms of processing, cleaved in post-Golgi vesicles by a host furin, releasing the mature small envelope protein M, and peptide pr. This cleavage is incomplete as up to 30% of viral particles still carry uncleaved prM. N-glycosylated. Post-translationally, N-glycosylated. The excreted form is glycosylated and this is required for efficient secretion of the protein from infected cells. In terms of processing, polyubiquitinated; ubiquitination is probably mediated by host TRIM23 and is prerequisite for NS5-STAT2 interaction. NS5 is not ISGylated or sumoylated. Acetylated by host KAT5. Acetylation modulates NS3 RNA-binding and unwinding activities and plays an important positive role for viral replication. Post-translationally, phosphorylated on serines residues. This phosphorylation may trigger NS5 nuclear localization.

It localises to the virion. The protein localises to the host nucleus. It is found in the host cytoplasm. The protein resides in the host perinuclear region. Its subcellular location is the secreted. It localises to the virion membrane. The protein localises to the host endoplasmic reticulum membrane. The enzyme catalyses Selective hydrolysis of -Xaa-Xaa-|-Yaa- bonds in which each of the Xaa can be either Arg or Lys and Yaa can be either Ser or Ala.. It catalyses the reaction RNA(n) + a ribonucleoside 5'-triphosphate = RNA(n+1) + diphosphate. It carries out the reaction a ribonucleoside 5'-triphosphate + H2O = a ribonucleoside 5'-diphosphate + phosphate + H(+). The catalysed reaction is ATP + H2O = ADP + phosphate + H(+). The enzyme catalyses a 5'-end (5'-triphosphoguanosine)-ribonucleoside in mRNA + S-adenosyl-L-methionine = a 5'-end (N(7)-methyl 5'-triphosphoguanosine)-ribonucleoside in mRNA + S-adenosyl-L-homocysteine. It catalyses the reaction a 5'-end (N(7)-methyl 5'-triphosphoguanosine)-ribonucleoside in mRNA + S-adenosyl-L-methionine = a 5'-end (N(7)-methyl 5'-triphosphoguanosine)-(2'-O-methyl-ribonucleoside) in mRNA + S-adenosyl-L-homocysteine + H(+). Its function is as follows. Plays a role in virus budding by binding to the cell membrane and gathering the viral RNA into a nucleocapsid that forms the core of a mature virus particle. During virus entry, may induce genome penetration into the host cytoplasm after hemifusion induced by the surface proteins. Can migrate to the cell nucleus where it modulates host functions. Functionally, inhibits RNA silencing by interfering with host Dicer. Prevents premature fusion activity of envelope proteins in trans-Golgi by binding to envelope protein E at pH6.0. After virion release in extracellular space, gets dissociated from E dimers. In terms of biological role, acts as a chaperone for envelope protein E during intracellular virion assembly by masking and inactivating envelope protein E fusion peptide. prM is the only viral peptide matured by host furin in the trans-Golgi network probably to avoid catastrophic activation of the viral fusion activity in acidic Golgi compartment prior to virion release. prM-E cleavage is inefficient, and many virions are only partially matured. These uncleaved prM would play a role in immune evasion. Its function is as follows. May play a role in virus budding. Exerts cytotoxic effects by activating a mitochondrial apoptotic pathway through M ectodomain. May display a viroporin activity. Functionally, binds to host cell surface receptor and mediates fusion between viral and cellular membranes. Envelope protein is synthesized in the endoplasmic reticulum in the form of heterodimer with protein prM. They play a role in virion budding in the ER, and the newly formed immature particle is covered with 60 spikes composed of heterodimer between precursor prM and envelope protein E. The virion is transported to the Golgi apparatus where the low pH causes dissociation of PrM-E heterodimers and formation of E homodimers. prM-E cleavage is inefficient, and many virions are only partially matured. These uncleaved prM would play a role in immune evasion. Involved in immune evasion, pathogenesis and viral replication. Once cleaved off the polyprotein, is targeted to three destinations: the viral replication cycle, the plasma membrane and the extracellular compartment. Essential for viral replication. Required for formation of the replication complex and recruitment of other non-structural proteins to the ER-derived membrane structures. Excreted as a hexameric lipoparticle that plays a role against host immune response. Antagonizing the complement function. Binds to the host macrophages and dendritic cells. Inhibits signal transduction originating from Toll-like receptor 3 (TLR3). In terms of biological role, component of the viral RNA replication complex that functions in virion assembly and antagonizes the host immune response. Its function is as follows. Required cofactor for the serine protease function of NS3. May have membrane-destabilizing activity and form viroporins. Functionally, displays three enzymatic activities: serine protease, NTPase and RNA helicase. NS3 serine protease, in association with NS2B, performs its autocleavage and cleaves the polyprotein at dibasic sites in the cytoplasm: C-prM, NS2A-NS2B, NS2B-NS3, NS3-NS4A, NS4A-2K and NS4B-NS5. NS3 RNA helicase binds RNA and unwinds dsRNA in the 3' to 5' direction. Also plays a role in virus assembly. Regulates the ATPase activity of the NS3 helicase activity. NS4A allows NS3 helicase to conserve energy during unwinding. In terms of biological role, functions as a signal peptide for NS4B and is required for the interferon antagonism activity of the latter. Its function is as follows. Induces the formation of ER-derived membrane vesicles where the viral replication takes place. Inhibits interferon (IFN)-induced host STAT1 phosphorylation and nuclear translocation, thereby preventing the establishment of cellular antiviral state by blocking the IFN-alpha/beta pathway. Functionally, replicates the viral (+) and (-) RNA genome, and performs the capping of genomes in the cytoplasm. NS5 methylates viral RNA cap at guanine N-7 and ribose 2'-O positions. Besides its role in RNA genome replication, also prevents the establishment of cellular antiviral state by blocking the interferon-alpha/beta (IFN-alpha/beta) signaling pathway. IFN-I induces binding of NS5 to host IFN-activated transcription factor STAT2, preventing its transcriptional activity. Host TRIM23 is the E3 ligase that interacts with and polyubiquitinates NS5 to promote its binding to STAT2 and trigger IFN-I signaling inhibition. The sequence is that of Genome polyprotein from Aedes aegypti (Yellowfever mosquito).